The primary structure comprises 72 residues: MANRPLDILNNALDTPVIVRLKGAREFRGELKGYDIHMNLVLDNAEELRDGEVVSKFSSVVIRGDNVVYVSP.

One can recognise a Sm domain in the interval 4–72; it reads RPLDILNNAL…RGDNVVYVSP (69 aa).

Belongs to the snRNP Sm proteins family.

The sequence is that of Putative snRNP Sm-like protein from Methanosarcina acetivorans (strain ATCC 35395 / DSM 2834 / JCM 12185 / C2A).